The chain runs to 311 residues: 4-hydroxy-tetrahydrodipicolinate synthase (311 aa).

Pyruvate is bound at residue T51. Residue Y140 is the Proton donor/acceptor of the active site. Catalysis depends on K168, which acts as the Schiff-base intermediate with substrate. Residue I209 participates in pyruvate binding.

The protein belongs to the DapA family. Homotetramer; dimer of dimers.

It is found in the cytoplasm. It catalyses the reaction L-aspartate 4-semialdehyde + pyruvate = (2S,4S)-4-hydroxy-2,3,4,5-tetrahydrodipicolinate + H2O + H(+). The protein operates within amino-acid biosynthesis; L-lysine biosynthesis via DAP pathway; (S)-tetrahydrodipicolinate from L-aspartate: step 3/4. Functionally, catalyzes the condensation of (S)-aspartate-beta-semialdehyde [(S)-ASA] and pyruvate to 4-hydroxy-tetrahydrodipicolinate (HTPA). This Streptococcus pneumoniae (strain ATCC BAA-255 / R6) protein is 4-hydroxy-tetrahydrodipicolinate synthase.